The following is a 355-amino-acid chain: Glucokinase (355 aa).

An ATP-binding site is contributed by 11 to 16 (GDIGGT).

The protein belongs to the bacterial glucokinase family.

The protein localises to the cytoplasm. The catalysed reaction is D-glucose + ATP = D-glucose 6-phosphate + ADP + H(+). This Synechocystis sp. (strain ATCC 27184 / PCC 6803 / Kazusa) protein is Glucokinase.